We begin with the raw amino-acid sequence, 261 residues long: Ribosome biogenesis protein C3_06160C_A (261 aa).

A disordered region spans residues 1-38 (MPQNEYIEQHIKKHGRRLDYEERKRKKEAREGHRVAKD). Short sequence motifs (nuclear localization signal) lie at residues 11 to 18 (IKKHGRRL) and 51 to 58 (AKKRYAEK). Residues 17-37 (RLDYEERKRKKEAREGHRVAK) show a composition bias toward basic and acidic residues. The interval 59–85 (VAMKKKIKAHQESKVKGPSTPKAEDGE) is disordered.

Belongs to the eukaryotic ribosomal protein eS8 family. Ribosome biogenesis protein NSA2 subfamily. Component of the pre-66S ribosomal particle. Interacts with NOP7 and RRP1. Interacts with RSA4 (via WD repeats).

Its subcellular location is the nucleus. It localises to the nucleolus. In terms of biological role, involved in the biogenesis of the 60S ribosomal subunit. May play a part in the quality control of pre-60S particles. The protein is Ribosome biogenesis protein C3_06160C_A of Candida albicans (strain SC5314 / ATCC MYA-2876) (Yeast).